Reading from the N-terminus, the 903-residue chain is Protein translocase subunit SecA (903 aa).

Residues Gln87, 105-109 (GEGKT), and Asp494 contribute to the ATP site. Residues 861–883 (SGSQGAAPRQPVRAEGKKVGRND) form a disordered region. The span at 872-881 (VRAEGKKVGR) shows a compositional bias: basic and acidic residues. Zn(2+) contacts are provided by Cys885, Cys887, Cys896, and Cys897.

The protein belongs to the SecA family. Monomer and homodimer. Part of the essential Sec protein translocation apparatus which comprises SecA, SecYEG and auxiliary proteins SecDF. Other proteins may also be involved. Zn(2+) serves as cofactor.

It is found in the cell membrane. The protein localises to the cytoplasm. It carries out the reaction ATP + H2O + cellular proteinSide 1 = ADP + phosphate + cellular proteinSide 2.. In terms of biological role, part of the Sec protein translocase complex. Interacts with the SecYEG preprotein conducting channel. Has a central role in coupling the hydrolysis of ATP to the transfer of proteins into and across the cell membrane, serving as an ATP-driven molecular motor driving the stepwise translocation of polypeptide chains across the membrane. The chain is Protein translocase subunit SecA from Symbiobacterium thermophilum (strain DSM 24528 / JCM 14929 / IAM 14863 / T).